Consider the following 793-residue polypeptide: Meiosis-specific protein ASY3 (793 aa).

4 disordered regions span residues 1 to 40 (MSDYRSFGSNYHPSSQSRKISIGVMADSQPKRNLVPDKDD), 58 to 97 (LQANKKEKSDLAAKQRNSAQVTGHVTSPWRSPRSSHRKLG), 110 to 287 (LSGS…KAGA), and 305 to 586 (EGLR…KRNS). Residues 7-19 (FGSNYHPSSQSRK) are compositionally biased toward polar residues. The span at 60-70 (ANKKEKSDLAA) shows a compositional bias: basic and acidic residues. Positions 72-86 (QRNSAQVTGHVTSPW) are enriched in polar residues. Positions 110-122 (LSGSKGLNKGLNG) are enriched in low complexity. The span at 131–142 (SFQNCPISSPQH) shows a compositional bias: polar residues. Basic and acidic residues-rich tracts occupy residues 151 to 165 (RNDRVMDRSPERMEE) and 177 to 187 (SQREKMDKPGK). Over residues 209–219 (PANNEDVNSET) the composition is skewed to polar residues. Residues 221-248 (EVEKTNFKLSQDKGSNDDPLIKPRHNSD) are compositionally biased toward basic and acidic residues. The segment covering 322-341 (KKQRGRRKNTVVKCRKAHSR) has biased composition (basic residues). 4 stretches are compositionally biased toward basic and acidic residues: residues 342-354 (KKDEADWSRKEAS), 363-385 (ESTETGKRSSSSDKKGSSHDLHP), 392-407 (QKPDISTREGDFHPSP), and 424-441 (NGDKHERPSNIFREKSVE). Low complexity-rich tracts occupy residues 455–470 (APISSPSPCCSPEASP) and 491–502 (GTKKTSQGTTGQ). 2 stretches are compositionally biased toward basic and acidic residues: residues 505–527 (DTEKRLPDFLEKKRDYSFRRESS) and 541–553 (SDERDSDGSREDS). The stretch at 682-745 (SNLAKTKRKH…KGSIKKQRTS (64 aa)) forms a coiled coil.

As to quaternary structure, interacts with ASY1.

It localises to the chromosome. Its subcellular location is the nucleus. Its function is as follows. Required for normal meiosis in male and female gametophytes. Acts with ASY1 at the interface between the developing chromosome axes and the recombination machinery to ensure interhomolog recombination. Required for synaptonemal complex formation during meiosis. The protein is Meiosis-specific protein ASY3 of Arabidopsis thaliana (Mouse-ear cress).